Reading from the N-terminus, the 677-residue chain is DNA ligase (677 aa).

NAD(+) contacts are provided by residues 34–38 (DLAFD), 83–84 (SL), and glutamate 115. Lysine 117 serves as the catalytic N6-AMP-lysine intermediate. Positions 138, 180, 297, and 321 each coordinate NAD(+). Zn(2+) is bound by residues cysteine 416, cysteine 419, cysteine 434, and cysteine 439. The BRCT domain maps to 596 to 677 (KKTSQLAGLT…LIKMLETEQA (82 aa)).

This sequence belongs to the NAD-dependent DNA ligase family. LigA subfamily. The cofactor is Mg(2+). Mn(2+) serves as cofactor.

It carries out the reaction NAD(+) + (deoxyribonucleotide)n-3'-hydroxyl + 5'-phospho-(deoxyribonucleotide)m = (deoxyribonucleotide)n+m + AMP + beta-nicotinamide D-nucleotide.. In terms of biological role, DNA ligase that catalyzes the formation of phosphodiester linkages between 5'-phosphoryl and 3'-hydroxyl groups in double-stranded DNA using NAD as a coenzyme and as the energy source for the reaction. It is essential for DNA replication and repair of damaged DNA. This chain is DNA ligase, found in Acidobacterium capsulatum (strain ATCC 51196 / DSM 11244 / BCRC 80197 / JCM 7670 / NBRC 15755 / NCIMB 13165 / 161).